A 353-amino-acid polypeptide reads, in one-letter code: Photosystem II protein D1 (353 aa).

N-acetylthreonine is present on Thr-2. Thr-2 is subject to Phosphothreonine. Transmembrane regions (helical) follow at residues 29–46 (YIGW…TATS), 118–133 (HFLL…EWEL), and 142–156 (WIAV…AATA). Residue His-118 participates in chlorophyll a binding. Position 126 (Tyr-126) interacts with pheophytin a. [CaMn4O5] cluster is bound by residues Asp-170 and Glu-189. A helical membrane pass occupies residues 197-218 (FHMLGVAGVFGGSLFSAMHGSL). His-198 provides a ligand contact to chlorophyll a. A quinone contacts are provided by residues His-215 and 264–265 (SF). A Fe cation-binding site is contributed by His-215. His-272 is a Fe cation binding site. The helical transmembrane segment at 274-288 (FLAAWPVVGIWFTAL) threads the bilayer. [CaMn4O5] cluster contacts are provided by His-332, Glu-333, Asp-342, and Ala-344. Positions 345–353 (AIEAPATNG) are excised as a propeptide.

This sequence belongs to the reaction center PufL/M/PsbA/D family. As to quaternary structure, PSII is composed of 1 copy each of membrane proteins PsbA, PsbB, PsbC, PsbD, PsbE, PsbF, PsbH, PsbI, PsbJ, PsbK, PsbL, PsbM, PsbT, PsbX, PsbY, PsbZ, Psb30/Ycf12, at least 3 peripheral proteins of the oxygen-evolving complex and a large number of cofactors. It forms dimeric complexes. The D1/D2 heterodimer binds P680, chlorophylls that are the primary electron donor of PSII, and subsequent electron acceptors. It shares a non-heme iron and each subunit binds pheophytin, quinone, additional chlorophylls, carotenoids and lipids. D1 provides most of the ligands for the Mn4-Ca-O5 cluster of the oxygen-evolving complex (OEC). There is also a Cl(-1) ion associated with D1 and D2, which is required for oxygen evolution. The PSII complex binds additional chlorophylls, carotenoids and specific lipids. is required as a cofactor. In terms of processing, tyr-161 forms a radical intermediate that is referred to as redox-active TyrZ, YZ or Y-Z. Post-translationally, C-terminally processed by CTPA; processing is essential to allow assembly of the oxygen-evolving complex and thus photosynthetic growth.

Its subcellular location is the plastid membrane. The catalysed reaction is 2 a plastoquinone + 4 hnu + 2 H2O = 2 a plastoquinol + O2. Its function is as follows. Photosystem II (PSII) is a light-driven water:plastoquinone oxidoreductase that uses light energy to abstract electrons from H(2)O, generating O(2) and a proton gradient subsequently used for ATP formation. It consists of a core antenna complex that captures photons, and an electron transfer chain that converts photonic excitation into a charge separation. The D1/D2 (PsbA/PsbD) reaction center heterodimer binds P680, the primary electron donor of PSII as well as several subsequent electron acceptors. This is Photosystem II protein D1 from Cuscuta exaltata (Tall dodder).